The chain runs to 27 residues: U18-ctenitoxin-Co1a (27 aa).

This sequence belongs to the u18-CNTX family. As to expression, expressed by the venom gland.

It is found in the secreted. Its function is as follows. Not toxic to mice by intracerebroventricular injection. The protein is U18-ctenitoxin-Co1a of Ctenus ornatus (Brazilian spider).